Consider the following 200-residue polypeptide: Inner membrane-spanning protein YciB (200 aa).

6 consecutive transmembrane segments (helical) span residues 7 to 27, 32 to 52, 56 to 76, 93 to 113, 126 to 146, and 153 to 173; these read HPLF…FVNA, FAAT…SYVV, IPLM…LTLV, LFAA…AIMF, ILTF…EIIW, and FWVG…AIAQ.

It belongs to the YciB family.

Its subcellular location is the cell inner membrane. Functionally, plays a role in cell envelope biogenesis, maintenance of cell envelope integrity and membrane homeostasis. In Bradyrhizobium sp. (strain ORS 278), this protein is Inner membrane-spanning protein YciB.